Reading from the N-terminus, the 217-residue chain is Lipid transferase CIDEA (217 aa).

Positions 33-110 (PARPFRVSNH…ILEKGQKWTP (78 aa)) constitute a CIDE-N domain. Positions 163–180 (CTSFKAVLRNLLRFMSYA) are amphipathic helix.

Belongs to the CIDE family. As to quaternary structure, homodimer. Interacts with CIDEC. Directly interacts with CEBPB. Interacts with isoform CLSTN3beta of CLSTN3; inhibiting the lipid transferase activity of CIDEA. In terms of tissue distribution, highly expressed in brown adipose tissue and, at lower levels, in white adipose tissue (at protein level). Undetectable in undifferentiated preadipocytes. Expressed in mammary gland during pregnancy and lactation, in epithelial cells, but not in the surrounding adipose tissue. Secreted into milk via milk fat globules.

The protein resides in the lipid droplet. It localises to the nucleus. The enzyme catalyses a triacyl-sn-glycerol(in) = a triacyl-sn-glycerol(out). Lipid transferase that promotes unilocular lipid droplet formation by mediating lipid droplet fusion. Lipid droplet fusion promotes their enlargement, restricting lipolysis and favoring lipid storage. Localizes on the lipid droplet surface, at focal contact sites between lipid droplets, and mediates atypical lipid droplet fusion by promoting directional net neutral lipid transfer from the smaller to larger lipid droplets. The transfer direction may be driven by the internal pressure difference between the contacting lipid droplet pair and occurs at a lower rate than that promoted by CIDEC. May also act as a CEBPB coactivator in epithelial cells to control the expression of a subset of CEBPB downstream target genes, including ID2, IGF1, PRLR, SOCS1, SOCS3, XDH, but not casein. By interacting with CEBPB, strengthens the association of CEBPB with the XDH promoter, increases histone acetylation and dissociates HDAC1 from the promoter. When overexpressed, induces apoptosis; the physiological significance of its role in apoptosis is unclear. The protein is Lipid transferase CIDEA of Mus musculus (Mouse).